The primary structure comprises 105 residues: Nitrogen fixation nifHD region GlnB-like protein 1 (105 aa).

Belongs to the P(II) protein family.

In terms of biological role, could be involved in the regulation of nitrogen fixation. This chain is Nitrogen fixation nifHD region GlnB-like protein 1 (glnBA), found in Methanobacterium ivanovii.